Reading from the N-terminus, the 544-residue chain is Membrane protein insertase YidC (544 aa).

Residues 4 to 24 (KALLALVLSAAVLLIYQIFIY) traverse the membrane as a helical segment. The tract at residues 44–78 (NPAAPVSPQTPADEPSSGSAANPETAAALPVDGTE) is disordered. Helical transmembrane passes span 363-383 (NYGI…WPLG), 434-454 (LPMI…LYAI), and 508-528 (PVIF…YWLF).

This sequence belongs to the OXA1/ALB3/YidC family. Type 1 subfamily. As to quaternary structure, interacts with the Sec translocase complex via SecD. Specifically interacts with transmembrane segments of nascent integral membrane proteins during membrane integration.

It is found in the cell inner membrane. In terms of biological role, required for the insertion and/or proper folding and/or complex formation of integral membrane proteins into the membrane. Involved in integration of membrane proteins that insert both dependently and independently of the Sec translocase complex, as well as at least some lipoproteins. Aids folding of multispanning membrane proteins. The sequence is that of Membrane protein insertase YidC from Syntrophus aciditrophicus (strain SB).